The primary structure comprises 434 residues: Trigger factor (434 aa).

In terms of domain architecture, PPIase FKBP-type spans 160–245 (GDKVKMNFVG…LTEVQAANLP (86 aa)).

The protein belongs to the FKBP-type PPIase family. Tig subfamily.

The protein resides in the cytoplasm. It carries out the reaction [protein]-peptidylproline (omega=180) = [protein]-peptidylproline (omega=0). Its function is as follows. Involved in protein export. Acts as a chaperone by maintaining the newly synthesized protein in an open conformation. Functions as a peptidyl-prolyl cis-trans isomerase. The sequence is that of Trigger factor from Shewanella baltica (strain OS223).